A 347-amino-acid chain; its full sequence is Suppressor of RNA-mediated gene silencing (347 aa).

The protein belongs to the phytoreovirus non-structural protein 10 family.

In terms of biological role, suppressor of RNA-mediated gene silencing, also known as post-transcriptional gene silencing (PTGS), a mechanism of plant viral defense that limits the accumulation of viral RNAs. This is Suppressor of RNA-mediated gene silencing from Catharanthus roseus (Madagascar periwinkle).